The chain runs to 288 residues: Solute carrier family 25 member 47-B (288 aa).

Solcar repeat units follow at residues M1–F83, A99–I191, and P199–L286. Helical transmembrane passes span L3–L23, G58–G75, I101–I121, G175–E195, P199–G219, and V257–F277.

The protein belongs to the mitochondrial carrier (TC 2.A.29) family.

The protein resides in the mitochondrion inner membrane. This chain is Solute carrier family 25 member 47-B (slc25a47b), found in Danio rerio (Zebrafish).